The following is a 463-amino-acid chain: General transcription factor IIH subunit 4 (463 aa).

Belongs to the TFB2 family. Component of the 7-subunit TFIIH core complex composed of XPB/ERCC3, XPD/ERCC2, GTF2H1, GTF2H2, GTF2H3, GTF2H4 and GTF2H5, which is active in NER. The core complex associates with the 3-subunit CDK-activating kinase (CAK) module composed of CCNH/cyclin H, CDK7 and MNAT1 to form the 10-subunit holoenzyme (holo-TFIIH) active in transcription. Part of TBP-based Pol II pre-initiation complex (PIC), in which Pol II core assembles with general transcription factors and other specific initiation factors including GTF2E1, GTF2E2, GTF2F1, GTF2F2, TCEA1, ERCC2, ERCC3, GTF2H2, GTF2H3, GTF2H4, GTF2H5, GTF2A1, GTF2A2, GTF2B and TBP; this large multi-subunit PIC complex mediates DNA unwinding and targets Pol II core to the transcription start site where the first phosphodiester bond forms.

Its subcellular location is the nucleus. Component of the general transcription and DNA repair factor IIH (TFIIH) core complex, which is involved in general and transcription-coupled nucleotide excision repair (NER) of damaged DNA and, when complexed to CAK, in RNA transcription by RNA polymerase II. In NER, TFIIH acts by opening DNA around the lesion to allow the excision of the damaged oligonucleotide and its replacement by a new DNA fragment. In transcription, TFIIH has an essential role in transcription initiation. When the pre-initiation complex (PIC) has been established, TFIIH is required for promoter opening and promoter escape. Phosphorylation of the C-terminal tail (CTD) of the largest subunit of RNA polymerase II by the kinase module CAK controls the initiation of transcription. This chain is General transcription factor IIH subunit 4 (Gtf2h4), found in Mus musculus (Mouse).